A 561-amino-acid polypeptide reads, in one-letter code: Methyl-accepting chemotaxis protein CtpM (561 aa).

Topologically, residues 1–11 are cytoplasmic; it reads MMRLTLKSKVL. A helical membrane pass occupies residues 12–32; sequence LLAMVPVLLFALVLSGGAVLI. Topologically, residues 33–205 are periplasmic; it reads LKKQADAEVK…KQDIDERIGT (173 aa). Residues 206 to 226 form a helical membrane-spanning segment; sequence LIASIVGIAGVLLVVLLVIGL. Over 227–561 the chain is Cytoplasmic; sequence AVANAMLRPL…LGRLVGQFRI (335 aa). The HAMP domain occupies 230-284; that stretch reads NAMLRPLHQIRQNLDDIAAGEGDLTRRLPVTSYDELGELAGSFNRFVEKIHGLVR. The region spanning 289–525 is the Methyl-accepting transducer domain; the sequence is MTGDLKQLVE…EINRSVHQIA (237 aa). Positions 333–357 are disordered; that stretch reads HEVAQSAQRAAEAAQQTDHEGQAAK. A compositionally biased stretch (low complexity) spans 336–348; that stretch reads AQSAQRAAEAAQQ.

It belongs to the methyl-accepting chemotaxis (MCP) protein family. As to quaternary structure, homodimer. The ligand-binding domain (LBD) is dimeric in the presence and the absence of ligands.

It is found in the cell inner membrane. Chemotactic-signal transducers respond to changes in the concentration of attractants and repellents in the environment, transduce a signal from the outside to the inside of the cell, and facilitate sensory adaptation through the variation of the level of methylation. Directly recognizes five C4-dicarboxylic acids: L-malic, citramalic, citraconic, bromosuccinic and methylsuccinic acids. Three of the identified ligands act as chemoattractants (L-malic, D,L-bromosuccinic and L-citramalic acids) whereas two of them (L-methylsuccinic and citraconic acids) behave as antagonists by inhibiting the downstream chemotaxis signaling cascade. Antagonists compete with chemoattractants, thereby decreasing the affinity for chemoattractants and the subsequent chemotactic response. Acts through the che chemosensory pathway. In Pseudomonas aeruginosa (strain ATCC 15692 / DSM 22644 / CIP 104116 / JCM 14847 / LMG 12228 / 1C / PRS 101 / PAO1), this protein is Methyl-accepting chemotaxis protein CtpM.